We begin with the raw amino-acid sequence, 415 residues long: Squalene synthase 12 (415 aa).

Transmembrane regions (helical) follow at residues alanine 281–phenylalanine 301 and leucine 391–leucine 411.

Belongs to the phytoene/squalene synthase family. Requires Mg(2+) as cofactor. Mn(2+) serves as cofactor.

The protein localises to the endoplasmic reticulum membrane. It carries out the reaction 2 (2E,6E)-farnesyl diphosphate + NADH + H(+) = squalene + 2 diphosphate + NAD(+). It catalyses the reaction 2 (2E,6E)-farnesyl diphosphate + NADPH + H(+) = squalene + 2 diphosphate + NADP(+). The protein operates within terpene metabolism; lanosterol biosynthesis; lanosterol from farnesyl diphosphate: step 1/3. In terms of biological role, component of the triterpene saponins (e.g. ginsenosides or panaxosides) and phytosterols biosynthetic pathways. Catalyzes the biosynthesis of squalene. The protein is Squalene synthase 12 of Panax ginseng (Korean ginseng).